Reading from the N-terminus, the 278-residue chain is Elongation factor Ts (278 aa).

Positions 82–85 (TEPV) are involved in Mg(2+) ion dislocation from EF-Tu.

The protein belongs to the EF-Ts family.

The protein localises to the cytoplasm. Functionally, associates with the EF-Tu.GDP complex and induces the exchange of GDP to GTP. It remains bound to the aminoacyl-tRNA.EF-Tu.GTP complex up to the GTP hydrolysis stage on the ribosome. This chain is Elongation factor Ts, found in Cytophaga hutchinsonii (strain ATCC 33406 / DSM 1761 / CIP 103989 / NBRC 15051 / NCIMB 9469 / D465).